Consider the following 490-residue polypeptide: Alginate production protein AlgE (490 aa).

The signal sequence occupies residues 1-32 (MNSSRSVNPRPSFAPRALSLAIALLLGAPAFA). Polar residues-rich tracts occupy residues 102–115 (DTLQ…NNSR) and 343–355 (QFQQ…NRSN). 2 disordered regions span residues 102 to 121 (DTLQ…GREP) and 331 to 355 (ARGS…NRSN).

It belongs to the AlgE family.

The protein resides in the cell outer membrane. It functions in the pathway glycan biosynthesis; alginate biosynthesis. Has non-porin-like, channel-forming properties and probably functions as an alginate permeability pore. In Pseudomonas aeruginosa (strain ATCC 15692 / DSM 22644 / CIP 104116 / JCM 14847 / LMG 12228 / 1C / PRS 101 / PAO1), this protein is Alginate production protein AlgE (algE).